Consider the following 465-residue polypeptide: Hydroxyacid-oxoacid transhydrogenase, mitochondrial (465 aa).

The protein belongs to the iron-containing alcohol dehydrogenase family. Hydroxyacid-oxoacid transhydrogenase subfamily.

The protein resides in the mitochondrion. It carries out the reaction (S)-3-hydroxybutanoate + 2-oxoglutarate = (R)-2-hydroxyglutarate + acetoacetate. The enzyme catalyses 4-hydroxybutanoate + 2-oxoglutarate = (R)-2-hydroxyglutarate + succinate semialdehyde. Functionally, catalyzes the cofactor-independent reversible oxidation of gamma-hydroxybutyrate (GHB) to succinic semialdehyde (SSA) coupled to reduction of 2-ketoglutarate (2-KG) to D-2-hydroxyglutarate (D-2-HG). L-3-hydroxybutyrate (L-3-OHB) is also a substrate for HOT when using 2-KG as hydrogen acceptor, resulting in the formation of D-2-HG. The sequence is that of Hydroxyacid-oxoacid transhydrogenase, mitochondrial from Caenorhabditis briggsae.